We begin with the raw amino-acid sequence, 306 residues long: Dermonecrotic toxin LarSicTox-alphaIB1ai (306 aa).

A signal peptide is located at residue valine 1. Residues 2 to 27 (RATEKFASMYFFCHSPQSAETDVAER) constitute a propeptide that is removed on maturation. Histidine 38 is a catalytic residue. Mg(2+) is bound by residues glutamate 58 and aspartate 60. Catalysis depends on histidine 74, which acts as the Nucleophile. 2 cysteine pairs are disulfide-bonded: cysteine 78-cysteine 84 and cysteine 80-cysteine 223. Residue aspartate 118 participates in Mg(2+) binding. N-linked (GlcNAc...) asparagine glycosylation occurs at asparagine 283.

It belongs to the arthropod phospholipase D family. Class II subfamily. Requires Mg(2+) as cofactor. As to expression, expressed by the venom gland.

The protein resides in the secreted. The enzyme catalyses an N-(acyl)-sphingosylphosphocholine = an N-(acyl)-sphingosyl-1,3-cyclic phosphate + choline. It carries out the reaction an N-(acyl)-sphingosylphosphoethanolamine = an N-(acyl)-sphingosyl-1,3-cyclic phosphate + ethanolamine. It catalyses the reaction a 1-acyl-sn-glycero-3-phosphocholine = a 1-acyl-sn-glycero-2,3-cyclic phosphate + choline. The catalysed reaction is a 1-acyl-sn-glycero-3-phosphoethanolamine = a 1-acyl-sn-glycero-2,3-cyclic phosphate + ethanolamine. In terms of biological role, dermonecrotic toxins cleave the phosphodiester linkage between the phosphate and headgroup of certain phospholipids (sphingolipid and lysolipid substrates), forming an alcohol (often choline) and a cyclic phosphate. This toxin acts on sphingomyelin (SM). It may also act on ceramide phosphoethanolamine (CPE), lysophosphatidylcholine (LPC) and lysophosphatidylethanolamine (LPE), but not on lysophosphatidylserine (LPS), and lysophosphatidylglycerol (LPG). It acts by transphosphatidylation, releasing exclusively cyclic phosphate products as second products. Induces dermonecrosis, hemolysis, increased vascular permeability, edema, inflammatory response, and platelet aggregation. This is Dermonecrotic toxin LarSicTox-alphaIB1ai from Loxosceles arizonica (Arizona brown spider).